A 562-amino-acid chain; its full sequence is Phosphoglucomutase-1 (562 aa).

Residue methionine 1 is modified to N-acetylmethionine. Lysine 16 carries the N6-acetyllysine modification. Arginine 23 lines the alpha-D-glucose 1,6-bisphosphate pocket. At threonine 115 the chain carries Phosphothreonine. Serine 117 provides a ligand contact to alpha-D-glucose 1,6-bisphosphate. Catalysis depends on serine 117, which acts as the Phosphoserine intermediate. Serine 117 lines the Mg(2+) pocket. Phosphoserine is present on residues serine 117 and serine 134. Position 185 is a phosphothreonine (threonine 185). A phosphoserine mark is found at serine 206 and serine 213. Mg(2+) contacts are provided by aspartate 288, aspartate 290, and aspartate 292. Alpha-D-glucose 1,6-bisphosphate contacts are provided by aspartate 292 and arginine 293. An N6-acetyllysine modification is found at lysine 349. Tyrosine 353 carries the post-translational modification Phosphotyrosine. Alpha-D-glucose 1,6-bisphosphate is bound at residue threonine 357. A Phosphoserine modification is found at serine 369. 3 residues coordinate alpha-D-glucose 1,6-bisphosphate: glutamate 376, serine 378, and lysine 389. The residue at position 378 (serine 378) is a Phosphoserine. Position 419 is an N6-succinyllysine (lysine 419). Threonine 467 is modified (phosphothreonine; by PAK1). A phosphoserine mark is found at serine 477, serine 485, and serine 505. Residue threonine 507 is modified to Phosphothreonine. Residues serine 509 and serine 541 each carry the phosphoserine modification.

Belongs to the phosphohexose mutase family. As to quaternary structure, monomer. It depends on Mg(2+) as a cofactor. Post-translationally, phosphorylation at Thr-467 by PAK1 significantly enhances enzymatic activity.

The protein localises to the cytoplasm. It carries out the reaction alpha-D-glucose 1-phosphate = alpha-D-glucose 6-phosphate. It catalyses the reaction O-phospho-L-seryl-[protein] + alpha-D-glucose 1-phosphate = alpha-D-glucose 1,6-bisphosphate + L-seryl-[protein]. The catalysed reaction is alpha-D-glucose 1,6-bisphosphate + L-seryl-[protein] = O-phospho-L-seryl-[protein] + alpha-D-glucose 6-phosphate. Catalyzes the reversible isomerization of alpha-D-glucose 1-phosphate to alpha-D-glucose 6-phosphate. The mechanism proceeds via the intermediate compound alpha-D-glucose 1,6-bisphosphate. This enzyme participates in both the breakdown and synthesis of glucose. In Macaca fascicularis (Crab-eating macaque), this protein is Phosphoglucomutase-1 (PGM1).